A 60-amino-acid polypeptide reads, in one-letter code: MKNTILILFTAFIALLGFFGMSAEALADPKADPLAGPNPDADPEAINLKAITALAKKLLG.

Residues 1–27 (MKNTILILFTAFIALLGFFGMSAEALA) form the signal peptide. AXPX repeat units lie at residues 27 to 30 (ADPK), 31 to 34 (ADPL), 35 to 38 (AGPN), and 41 to 44 (ADPE). The propeptide occupies 28 to 45 (DPKADPLAGPNPDADPEA). Position 59 is a leucine amide (leucine 59).

The protein belongs to the MCD family. Mastoparan subfamily. As to expression, expressed by the venom gland.

The protein resides in the secreted. The synthetic peptide shows antimicrobial activities against Gram-negative bacteria (but not against all strains tested), Gram-positive bacteria (all strains tested) and the fungi C.albicans and C.parapsilosis. Exhibits moderate hemolytic activity (25% at 100 ug/ml) against washed human erythrocytes. This chain is Mastoparan-VT3, found in Vespa tropica (Greater banded hornet).